The following is a 689-amino-acid chain: MEVVSSLGIRDLPASLSVTTSLNHRPHRSDKDGAPAKSPIRPSRTRRPSTSPAKKPKPFRERDAFPSSLPLHSKNPYIIHRDIQIFARQNNLEVALTILDYLEQRGIPVNATTFSALLEACVRRKSLLHGKQVHVHIRINGLESNEFLRTKLVHMYTACGSVKDAQKVFDESTSSNVYSWNALLRGTVISGKKRYQDVLSTFTEMRELGVDLNVYSLSNVFKSFAGASALRQGLKTHALAIKNGLFNSVFLKTSLVDMYFKCGKVGLARRVFDEIVERDIVVWGAMIAGLAHNKRQWEALGLFRTMISEEKIYPNSVILTTILPVLGDVKALKLGKEVHAHVLKSKNYVEQPFVHSGLIDLYCKCGDMASGRRVFYGSKQRNAISWTALMSGYAANGRFDQALRSIVWMQQEGFRPDVVTIATVLPVCAELRAIKQGKEIHCYALKNLFLPNVSLVTSLMVMYSKCGVPEYPIRLFDRLEQRNVKAWTAMIDCYVENCDLRAGIEVFRLMLLSKHRPDSVTMGRVLTVCSDLKALKLGKELHGHILKKEFESIPFVSARIIKMYGKCGDLRSANFSFDAVAVKGSLTWTAIIEAYGCNELFRDAINCFEQMVSRGFTPNTFTFTAVLSICSQAGFVDEAYRFFNLMLRMYNLQPSEEHYSLVIELLNRCGRVEEAQRLAVMSSSSSLQT.

A chloroplast-targeting transit peptide spans 1–49 (MEVVSSLGIRDLPASLSVTTSLNHRPHRSDKDGAPAKSPIRPSRTRRPS). A disordered region spans residues 16 to 68 (LSVTTSLNHRPHRSDKDGAPAKSPIRPSRTRRPSTSPAKKPKPFRERDAFPSS). Residues 38-52 (SPIRPSRTRRPSTSP) show a composition bias toward low complexity. 18 PPR repeats span residues 75 to 109 (NPYI…GIPV), 110 to 144 (NATT…GLES), 145 to 175 (NEFL…STSS), 176 to 212 (NVYS…GVDL), 213 to 247 (NVYS…GLFN), 248 to 282 (SVFL…DIVV), 283 to 309 (WGAM…MISE), 315 to 350 (NSVI…NYVE), 351 to 381 (QPFV…SKQR), 382 to 416 (NAIS…GFRP), 417 to 451 (DVVT…LFLP), 452 to 482 (NVSL…LEQR), 483 to 517 (NVKA…KHRP), 518 to 552 (DSVT…EFES), 553 to 583 (IPFV…VAVK), 584 to 618 (GSLT…GFTP), 619 to 649 (NTFT…MLRM), and 655 to 689 (SEEH…SLQT).

The protein belongs to the PPR family. PCMP-A subfamily.

It localises to the plastid. Its subcellular location is the chloroplast. This is Pentatricopeptide repeat-containing protein At1g71460, chloroplastic (PCMP-A3) from Arabidopsis thaliana (Mouse-ear cress).